A 138-amino-acid polypeptide reads, in one-letter code: Small ribosomal subunit protein uS11c (138 aa).

Residues methionine 1–arginine 24 form a disordered region. Residues glycine 9 to arginine 24 are compositionally biased toward basic residues.

It belongs to the universal ribosomal protein uS11 family. In terms of assembly, part of the 30S ribosomal subunit.

The protein resides in the plastid. It localises to the chloroplast. The protein is Small ribosomal subunit protein uS11c of Chloranthus spicatus (Chulantree).